The primary structure comprises 496 residues: Xylulose kinase (496 aa).

83–84 (MH) is a binding site for substrate. D237 functions as the Proton acceptor in the catalytic mechanism.

The protein belongs to the FGGY kinase family.

It carries out the reaction D-xylulose + ATP = D-xylulose 5-phosphate + ADP + H(+). Catalyzes the phosphorylation of D-xylulose to D-xylulose 5-phosphate. The polypeptide is Xylulose kinase (Staphylococcus epidermidis (strain ATCC 35984 / DSM 28319 / BCRC 17069 / CCUG 31568 / BM 3577 / RP62A)).